We begin with the raw amino-acid sequence, 343 residues long: L-ornithine/L-arginine 3-hydroxylase (343 aa).

Fe cation-binding residues include His147 and Glu149. Over residues 199–215 the composition is skewed to polar residues; it reads MPDNSHLPQNTAESTGD. The interval 199 to 218 is disordered; sequence MPDNSHLPQNTAESTGDPTK. Residue His302 coordinates Fe cation. Residue Arg316 coordinates 2-oxoglutarate.

The protein belongs to the clavaminate synthase family. Requires Fe(2+) as cofactor.

The enzyme catalyses L-ornithine + 2-oxoglutarate + O2 = (3S)-3-hydroxy-L-ornithine + succinate + CO2. It catalyses the reaction L-arginine + 2-oxoglutarate + O2 = (2S,3S)-hydroxyarginine + succinate + CO2. Its function is as follows. Alpha-ketoglutarate-dependent dioxygenase that in vitro catalyzes the regio- and stereoselective hydroxylation of L-ornithine and L-arginine, leading to (3S)-3-hydroxy-L-ornithine and (3S)-3-hydroxy-L-arginine, respectively. Cannot use L-lysine, D-ornithine, or D-arginine as substrate. This chain is L-ornithine/L-arginine 3-hydroxylase, found in Catenulispora acidiphila (strain DSM 44928 / JCM 14897 / NBRC 102108 / NRRL B-24433 / ID139908).